Here is a 214-residue protein sequence, read N- to C-terminus: Ribosomal RNA small subunit methyltransferase G (214 aa).

S-adenosyl-L-methionine contacts are provided by residues glycine 81, methionine 86, 132-133 (VE), and arginine 147.

Belongs to the methyltransferase superfamily. RNA methyltransferase RsmG family.

It localises to the cytoplasm. The catalysed reaction is guanosine(527) in 16S rRNA + S-adenosyl-L-methionine = N(7)-methylguanosine(527) in 16S rRNA + S-adenosyl-L-homocysteine. Functionally, specifically methylates the N7 position of guanine in position 527 of 16S rRNA. This is Ribosomal RNA small subunit methyltransferase G from Pseudomonas fluorescens (strain Pf0-1).